The chain runs to 360 residues: Phospho-N-acetylmuramoyl-pentapeptide-transferase (360 aa).

10 helical membrane-spanning segments follow: residues 27-47, 70-90, 98-118, 134-154, 168-188, 199-219, 239-259, 263-283, 288-308, and 337-357; these read GALF…ISLL, GTPT…ILLW, VWVT…DDYL, LLLE…YSPA, ALLN…VGAG, GLAI…AYLV, LAVV…FNAP, IFMG…IAVA, IVLA…IIQV, and QVVI…LATL.

It belongs to the glycosyltransferase 4 family. MraY subfamily. The cofactor is Mg(2+).

The protein localises to the cell inner membrane. It carries out the reaction UDP-N-acetyl-alpha-D-muramoyl-L-alanyl-gamma-D-glutamyl-meso-2,6-diaminopimeloyl-D-alanyl-D-alanine + di-trans,octa-cis-undecaprenyl phosphate = di-trans,octa-cis-undecaprenyl diphospho-N-acetyl-alpha-D-muramoyl-L-alanyl-D-glutamyl-meso-2,6-diaminopimeloyl-D-alanyl-D-alanine + UMP. The protein operates within cell wall biogenesis; peptidoglycan biosynthesis. In terms of biological role, catalyzes the initial step of the lipid cycle reactions in the biosynthesis of the cell wall peptidoglycan: transfers peptidoglycan precursor phospho-MurNAc-pentapeptide from UDP-MurNAc-pentapeptide onto the lipid carrier undecaprenyl phosphate, yielding undecaprenyl-pyrophosphoryl-MurNAc-pentapeptide, known as lipid I. This Methylorubrum populi (strain ATCC BAA-705 / NCIMB 13946 / BJ001) (Methylobacterium populi) protein is Phospho-N-acetylmuramoyl-pentapeptide-transferase.